A 415-amino-acid chain; its full sequence is MNEVLAKGKKAKEIARELVLKSTEQKNEALSAIADQLILETAYILEENKKDIEEGKAKGFSDSLLDRLMLNEQRIVDMTEGIKQLIELRDPVGECVSAWERPNGLSIQEMRVPLGVVGMIYEARPNVTVDAATICLKTGNAVILRGSSSAIHSNKAIVAVIHRALKQTSLPQESVQLIEDTTRDSAKQLFTMNDYLDVLIPRGGKQLIDTVVREASVPVLETGAGNCHVFIDETADKQMAFDIIINAKTQRPSVCNAIETIVLHEKWAEQYGSELFSSLKKRGVELRGDQKALAMDSSIVLASEEDWGTEFLSLTLAVKLVSSIEEAIHHINTYGSMHSEAIISENEENVSKFFVSVDAAALYHNASTRFTDGSEFGFGAEIGISTQKLHVRGPMGLPALTSTKYVIRGNGQIRK.

This sequence belongs to the gamma-glutamyl phosphate reductase family.

It localises to the cytoplasm. It carries out the reaction L-glutamate 5-semialdehyde + phosphate + NADP(+) = L-glutamyl 5-phosphate + NADPH + H(+). The protein operates within amino-acid biosynthesis; L-proline biosynthesis; L-glutamate 5-semialdehyde from L-glutamate: step 2/2. In terms of biological role, catalyzes the NADPH-dependent reduction of L-glutamate 5-phosphate into L-glutamate 5-semialdehyde and phosphate. The product spontaneously undergoes cyclization to form 1-pyrroline-5-carboxylate. This chain is Gamma-glutamyl phosphate reductase, found in Bacillus thuringiensis subsp. konkukian (strain 97-27).